The sequence spans 482 residues: Cysteine--tRNA ligase (482 aa).

A Zn(2+)-binding site is contributed by Cys-28. The 'HIGH' region signature appears at 30-40; the sequence is PTVYNFLHVGN. Residues Cys-208, His-233, and Glu-237 each contribute to the Zn(2+) site. Positions 265 to 269 match the 'KMSKS' region motif; the sequence is KMSKS. Residue Lys-268 coordinates ATP.

Belongs to the class-I aminoacyl-tRNA synthetase family. In terms of assembly, monomer. It depends on Zn(2+) as a cofactor.

It localises to the cytoplasm. The enzyme catalyses tRNA(Cys) + L-cysteine + ATP = L-cysteinyl-tRNA(Cys) + AMP + diphosphate. The protein is Cysteine--tRNA ligase of Bdellovibrio bacteriovorus (strain ATCC 15356 / DSM 50701 / NCIMB 9529 / HD100).